The chain runs to 964 residues: Myocardin-related transcription factor A (964 aa).

The mediates interaction with SCAI and ACTB stretch occupies residues 1-291 (MTLLEPEMLM…KQDKGAPAMD (291 aa)). The stretch at 15 to 40 (SVLQLKLQQRRTREELVSQGIMPPLK) is one RPEL 1 repeat. The residue at position 41 (Ser41) is a Phosphoserine. An intervening spacer sequence 1 region spans residues 41-58 (SPAAFHEQRRSLERARTE). An RPEL 2 repeat occupies 59–84 (DYLKRKIRSRPERAELVRMHILEETS). The Bipartite Nuclear localization signal motif lies at 62-100 (KRKIRSRPERAELVRMHILEETSAEPSLQAKQLKLKRAR). The segment at 85 to 102 (AEPSLQAKQLKLKRARLA) is intervening spacer sequence 2. The stretch at 103-128 (DDLNEKIAQRPGPMELVEKNILPVES) is one RPEL 3 repeat. Disordered stretches follow at residues 145 to 292 (ADSS…AMDS) and 328 to 371 (LPAP…RQSS). Phosphoserine is present on residues Ser159, Ser174, and Ser191. The span at 186-197 (SATSISPTQVLS) shows a compositional bias: polar residues. The span at 215-224 (PPLPPAPLLP) shows a compositional bias: pro residues. Over residues 251 to 266 (ASEKSQRSKKAKELKP) the composition is skewed to basic and acidic residues. A compositionally biased stretch (low complexity) spans 340–365 (GSSAPTPSRSLSTSSSPSSGTPGPSG). A phosphoserine mark is found at Ser349 and Ser351. Phosphothreonine is present on Thr352. Phosphoserine is present on residues Ser355 and Ser358. At Thr360 the chain carries Phosphothreonine. At Ser371 the chain carries Phosphoserine. The SAP domain occupies 385-419 (LDDMKVAELKQELKLRSLPVSGTKTELIERLRAYQ). Ser423 and Ser484 each carry phosphoserine. Residues 484–508 (STGSTPPVSPTPSERSLLSTGDENS) form a disordered region. Thr485 carries the phosphothreonine modification. Residue Ser487 is modified to Phosphoserine. The residue at position 488 (Thr488) is a Phosphothreonine. Phosphoserine is present on Ser492. At Thr494 the chain carries Phosphothreonine. Ser496 carries the post-translational modification Phosphoserine. A compositionally biased stretch (polar residues) spans 497–508 (ERSLLSTGDENS). Phosphoserine is present on residues Ser520, Ser530, Ser544, and Ser548. Positions 552 to 600 (RAELEGLDKDQMLQEKDKQIEELTRMLQQKQQLVELLRLQLEQQKRAQQ) form a coiled coil. A phosphoserine mark is found at Ser605, Ser606, Ser651, Ser687, Ser718, Ser724, and Ser728. The segment at 638-673 (TTNHGDTQAPAPESPPVVVKQEAGPPEPDLAPSSQL) is disordered. 2 disordered regions span residues 706–779 (NKSA…SSSQ) and 796–849 (ADFK…RLED). Residues 715-727 (PAGSPQQPLSQPG) are compositionally biased toward low complexity. Residues 764–779 (TVTQQPKQQENGSSSQ) are compositionally biased toward polar residues. The span at 796 to 810 (ADFKEPPSLPGKEKS) shows a compositional bias: basic and acidic residues. Phosphoserine is present on Ser810. Thr822 bears the Phosphothreonine mark. Ser826 and Ser840 each carry phosphoserine. The residue at position 842 (Thr842) is a Phosphothreonine. Ser892 bears the Phosphoserine mark.

As to quaternary structure, interacts with SRF, forming the SRF-MRTFA nuclear complex which binds the 5'-CArG-3' consensus motif (CArG box) on DNA via SRF. Interacts (via RPEL repeats) with globular actin (G-actin), thereby regulating its subcellular location and activity of the complex formed with SRF. Either forms a trivalent (by binding three G-actin monomers) or pentavalent (by binding five G-actin monomers) complex with G-actin. Forms a nuclear ternary complex with SCAI and SRF, leading to suppress MRTFA-induced SRF transcriptional activity. Interacts with beta-actin (ACTB); interaction with ACTB prevents interaction with SCAI. Interacts with MRTFB. Post-translationally, phosphorylation at Ser-41 by Erk inhibits binding of globular actin (G-actin), unmasking the nuclear localization signal (NLS) and promoting nuclear import. As to expression, expressed in heart, brain, spleen, lung, liver, muscle, kidney and testis.

The protein localises to the cytoplasm. Its subcellular location is the nucleus. In terms of biological role, transcription coactivator that associates with the serum response factor (SRF) transcription factor to control expression of genes regulating the cytoskeleton during development, morphogenesis and cell migration. The SRF-MRTFA complex activity responds to Rho GTPase-induced changes in cellular globular actin (G-actin) concentration, thereby coupling cytoskeletal gene expression to cytoskeletal dynamics. MRTFA binds G-actin via its RPEL repeats, regulating activity of the MRTFA-SRF complex. Activity is also regulated by filamentous actin (F-actin) in the nucleus. This is Myocardin-related transcription factor A (Mrtfa) from Mus musculus (Mouse).